A 723-amino-acid polypeptide reads, in one-letter code: Methionine--tRNA ligase (723 aa).

Positions 12–22 match the 'HIGH' region motif; that stretch reads PYANGDIHLGH. The Zn(2+) site is built by Cys143, Cys146, Cys156, and Cys159. The 'KMSKS' region motif lies at 345–349; sequence KMSKS. Lys348 provides a ligand contact to ATP. The segment at 568–604 is disordered; the sequence is PAAATAPAKDAKPAKEAGSQQRHAEKQQHAAGVSETA. Residues 612–723 enclose the tRNA-binding domain; that stretch reads DFTKVDLRIA…EGAQAGMRVK (112 aa).

It belongs to the class-I aminoacyl-tRNA synthetase family. MetG type 1 subfamily. Homodimer. It depends on Zn(2+) as a cofactor.

The protein localises to the cytoplasm. The enzyme catalyses tRNA(Met) + L-methionine + ATP = L-methionyl-tRNA(Met) + AMP + diphosphate. Is required not only for elongation of protein synthesis but also for the initiation of all mRNA translation through initiator tRNA(fMet) aminoacylation. In Azoarcus sp. (strain BH72), this protein is Methionine--tRNA ligase.